We begin with the raw amino-acid sequence, 358 residues long: Endo-1,4-beta-xylanase B (358 aa).

Positions methionine 1–alanine 17 are cleaved as a signal peptide. Residues glutamine 40–glycine 352 form the GH10 domain. Asparagine 136 is a glycosylation site (N-linked (GlcNAc...) asparagine). Residue glutamate 166 is the Proton donor of the active site. Glutamate 274 functions as the Nucleophile in the catalytic mechanism.

The protein belongs to the glycosyl hydrolase 10 (cellulase F) family.

It localises to the secreted. It carries out the reaction Endohydrolysis of (1-&gt;4)-beta-D-xylosidic linkages in xylans.. It functions in the pathway glycan degradation; xylan degradation. Its activity is regulated as follows. Partial inhibition of activity is detected in the presence of Ag(+), Cu2(+) and SDS. Like most fungal xylanases, activity is completely inhibited by Hg(2+) since Hg(2+) could interact with tryptophan residues and oxidize the indole ring. Beta-mercaptoethanol enhances the enzymatic activity by counteracting the oxidation effects of the S-S linkage between cysteine residues. Endo-1,4-beta-xylanase involved in the hydrolysis of xylan, a major structural heterogeneous polysaccharide found in plant biomass representing the second most abundant polysaccharide in the biosphere, after cellulose. Is more active on soluble wheat arabinoxylan (defined as 100%) than on birchwood xylan (75.4%) and beechwood xylan (70.8%), and less active on insoluble wheat arabinoxylan (17.4%). Xylose is the major hydrolysis product of XynB. This Humicola insolens (Soft-rot fungus) protein is Endo-1,4-beta-xylanase B.